The following is a 122-amino-acid chain: Urocortin (122 aa).

The first 25 residues, 1–25 (MRQRGRATLLVALLLLVQLRPESSQ), serve as a signal peptide directing secretion. A propeptide spanning residues 26–80 (WSPAAAAANVVQDPNLRWNPGVRNQGGGVRALLLLLAERFPRRAGSEPAGERQRR) is cleaved from the precursor. The residue at position 120 (valine 120) is a Valine amide.

The protein belongs to the sauvagine/corticotropin-releasing factor/urotensin I family. In terms of assembly, interacts with CRHR1 and CRHR2 (via their N-terminal extracellular domain).

The protein localises to the secreted. Acts in vitro to stimulate the secretion of adrenocorticotropic hormone (ACTH). Binds with high affinity to CRF receptor types 1, 2-alpha, and 2-beta. Plays a role in the establishment of normal hearing thresholds. Reduces food intake and regulates ghrelin levels in gastric body and plasma. This is Urocortin (Ucn) from Rattus norvegicus (Rat).